We begin with the raw amino-acid sequence, 930 residues long: Urea transporter 2 (930 aa).

Residues 1–11 (MSDHHPLKEMS) are compositionally biased toward basic and acidic residues. The segment at 1-90 (MSDHHPLKEM…KRRESEVSRR (90 aa)) is disordered. Low complexity-rich tracts occupy residues 12–25 (DSNS…PLSS) and 32–43 (SELSSPTWPSSS). Over residues 56-89 (PEEKDLRSSDEDSHIVKIEKPNERNKRRESEVSR) the composition is skewed to basic and acidic residues. Helical transmembrane passes span 145-165 (ISGL…TIAG), 185-205 (AIAS…MAVF), 213-233 (WWLL…SSAL), 242-262 (LPVF…ATGH), 280-300 (NITW…VGVG), 311-331 (GGVI…HAAI), 350-372 (IYLG…MFYA), and 401-421 (VVGV…FLLL). Positions 452 to 479 (SEEEKSPNGGSGEQSHGSGQWKAEESSE) are disordered. Ser487 is modified (phosphoserine). 4 consecutive transmembrane segments (helical) span residues 610–630 (GILI…SGCL), 648–668 (AIAA…MAVF), 676–696 (WWLL…SSAL), and 705–725 (LPVF…ATGH). The N-linked (GlcNAc...) asparagine glycan is linked to Asn743. Transmembrane regions (helical) follow at residues 774–794 (GGIF…HAAI), 813–833 (IYFG…GGMF), 842–862 (LLAI…ANML), and 864–884 (VFGL…FLLL).

Belongs to the urea transporter family. Highly expressed in kidney medulla (at protein level). Also detected in testes, heart, brain and liver (at protein level). In the kidney, present in thin descending limbs of the loop of Henle and in the middle and terminal inner medullary collecting ducts. In terms of tissue distribution, expressed in the kidney medulla. As to expression, expressed in the peritubular myoid cells forming the outermost layer of the seminiferous tubules within the testes and is not detected in kidney. Expression levels are coordinated with the stage of testes development and increase 15 days postpartum, commensurate with the start of seminiferous tubule fluid movement.

The protein localises to the apical cell membrane. It localises to the basolateral cell membrane. It catalyses the reaction urea(in) = urea(out). With respect to regulation, inhibited by phloretin. Activated by forskolin, 3-isobutyl-1-methylxanthine (IBMX) and cAMP. Its activity is regulated as follows. Inhibited by phloretin. Inhibited by phloretin. Activated by forskolin, 3-isobutyl-1-methylxanthine (IBMX) and cAMP. Functionally, mediates the transport of urea driven by a concentration gradient across the cell membrane of the renal inner medullary collecting duct which is critical to the urinary concentrating mechanism. Mediates the transport of urea driven by a concentration gradient across the cell membrane. Implicated in the urea movement across the blood-testis barrier and does not translocate water. The sequence is that of Urea transporter 2 (Slc14a2) from Mus musculus (Mouse).